The sequence spans 431 residues: E3 ubiquitin-protein ligase RNF128 (431 aa).

Positions 1 to 38 (MGQLPGAGVFCRGGCGFSRLLAWCFLLVLSPQTPGSRG) are cleaved as a signal peptide. N-linked (GlcNAc...) asparagine glycans are attached at residues asparagine 48, asparagine 59, and asparagine 101. The PA domain maps to 75-186 (SPLEPVAGVL…LKGTKILQSI (112 aa)). A helical membrane pass occupies residues 211–231 (IFFVSVSFFIITAATVGYFIF). An RING-type; atypical zinc finger spans residues 280–321 (CAVCIELYKPNDLVRILTCNHVFHKTCVDPWLLEHRTCPMCK). Residues 345 to 354 (VSNETSSNAS) show a composition bias toward polar residues. A disordered region spans residues 345 to 431 (VSNETSSNAS…QETTVREIKS (87 aa)).

Post-translationally, auto-ubiquitinated. Controls the development of T-cell clonal anergy by ubiquitination.

The protein resides in the cytoplasm. It is found in the endomembrane system. The protein localises to the cytoskeleton. Its subcellular location is the perinuclear region. The catalysed reaction is S-ubiquitinyl-[E2 ubiquitin-conjugating enzyme]-L-cysteine + [acceptor protein]-L-lysine = [E2 ubiquitin-conjugating enzyme]-L-cysteine + N(6)-ubiquitinyl-[acceptor protein]-L-lysine.. Its pathway is protein modification; protein ubiquitination. E3 ubiquitin-protein ligase that catalyzes 'Lys-27', 'Lys-48'- or 'Lys-63'-linked polyubiquitin chains formation and plays a role in different biological processes such as modulation of immune response, cytoskeletal dynamics or protein homeostasis. Inhibits IL2 and IL4 transcription, thereby playing an important role in the induction of the anergic phenotype, a long-term stable state of T-lymphocyte unresponsiveness to antigenic stimulation associated with the blockade of interleukin production. Ubiquitinates ARPC5 with 'Lys-48' linkages and COR1A with 'Lys-63' linkages leading to their degradation, down-regulation of these cytoskeletal components results in impaired lamellipodium formation and reduced accumulation of F-actin at the immunological synapse. Functions in the patterning of the dorsal ectoderm; sensitizes ectoderm to respond to neural-inducing signals. Plays a positive role in innate immune response by promoting 'Lys-63'-linked ubiquitination of TBK1 after RNA- or DNA-virus infection. Regulates alveolar macrophage activation and neutrophil infiltration by interacting with TLR4, targeting it for degradation, and inhibiting NF-kappa-B activation, hence decreasing pro-inflammatory cytokines. Negatively regulates the IL-3/STAT5 signaling pathway by facilitating 'Lys-27'-linked polyubiquitination of IL3RA leading to its degradation via lysosomal pathway. Directly regulates the N-glycosylation process in the endoplasmic reticulum by targeting the glycosyl-transferase RPN1 for ubiquitination and degradation. Other substrates targeted for degradation by RNF128 include transmembrane proteins CD40L, CD83 or the tetraspanin CD151. The sequence is that of E3 ubiquitin-protein ligase RNF128 (RNF128) from Bos taurus (Bovine).